A 133-amino-acid polypeptide reads, in one-letter code: Holo-[acyl-carrier-protein] synthase (133 aa).

Residues Asp-8 and Glu-57 each contribute to the Mg(2+) site.

It belongs to the P-Pant transferase superfamily. AcpS family. It depends on Mg(2+) as a cofactor.

It is found in the cytoplasm. The enzyme catalyses apo-[ACP] + CoA = holo-[ACP] + adenosine 3',5'-bisphosphate + H(+). In terms of biological role, transfers the 4'-phosphopantetheine moiety from coenzyme A to a Ser of acyl-carrier-protein. The chain is Holo-[acyl-carrier-protein] synthase from Caulobacter vibrioides (strain ATCC 19089 / CIP 103742 / CB 15) (Caulobacter crescentus).